The chain runs to 199 residues: Probable V-type proton ATPase 20 kDa proteolipid subunit (199 aa).

Topologically, residues 1–3 are vacuolar; the sequence is MSL. A helical membrane pass occupies residues 4–24; the sequence is FSTSLWTTTVMSIIVGLYMLF. At 25–46 the chain is on the cytoplasmic side; the sequence is HNSGESFDFGSFLLDTSPYTWG. The chain crosses the membrane as a helical span at residues 47–67; that stretch reads LLGIASCVAFGIIGAAWGIFI. The Vacuolar portion of the chain corresponds to 68–86; the sequence is CGTSILGGAVKAPRIKTKN. A helical transmembrane segment spans residues 87 to 107; that stretch reads LISIIFCEVVAIYSLIIAIVF. Over 108-130 the chain is Cytoplasmic; that stretch reads SAKINDINPAGFYTKSHYYTGFA. The helical transmembrane segment at 131-151 threads the bilayer; it reads LFWGGITVGLCNLICGVCVGI. At 152-170 the chain is on the vacuolar side; that stretch reads TGSSAALADAQDASLFVKV. A helical membrane pass occupies residues 171-191; that stretch reads LVVEIFGSVLGLFGLIVGLLI. At 192 to 199 the chain is on the cytoplasmic side; sequence GGKASDFS.

Belongs to the V-ATPase proteolipid subunit family. As to quaternary structure, V-ATPase is a heteromultimeric enzyme composed of a peripheral catalytic V1 complex (components A to H) attached to an integral membrane V0 proton pore complex (components: a, c, c', c'', d, e, f and VOA1). The decameric c-ring forms the proton-conducting pore, and is composed of eight proteolipid subunits c, one subunit c' and one subunit c''.

It is found in the vacuole membrane. In terms of biological role, proton-conducting pore forming subunit of the V0 complex of vacuolar(H+)-ATPase (V-ATPase), a multisubunit enzyme composed of a peripheral complex (V1) that hydrolyzes ATP and a membrane integral complex (V0) that translocates protons. V-ATPase is responsible for acidifying and maintaining the pH of intracellular compartments. This chain is Probable V-type proton ATPase 20 kDa proteolipid subunit (vma16), found in Schizosaccharomyces pombe (strain 972 / ATCC 24843) (Fission yeast).